A 134-amino-acid chain; its full sequence is Ribosome-binding factor A (134 aa).

This sequence belongs to the RbfA family. In terms of assembly, monomer. Binds 30S ribosomal subunits, but not 50S ribosomal subunits or 70S ribosomes.

The protein localises to the cytoplasm. In terms of biological role, one of several proteins that assist in the late maturation steps of the functional core of the 30S ribosomal subunit. Associates with free 30S ribosomal subunits (but not with 30S subunits that are part of 70S ribosomes or polysomes). Required for efficient processing of 16S rRNA. May interact with the 5'-terminal helix region of 16S rRNA. The sequence is that of Ribosome-binding factor A from Psychrobacter arcticus (strain DSM 17307 / VKM B-2377 / 273-4).